The sequence spans 316 residues: tRNA dimethylallyltransferase (316 aa).

17–24 (GPTASGKT) contributes to the ATP binding site. A substrate-binding site is contributed by 19-24 (TASGKT). 4 interaction with substrate tRNA regions span residues 42–45 (DSAL), 166–170 (QRLSR), 247–252 (RCVGYR), and 280–287 (KRQITWLR).

It belongs to the IPP transferase family. In terms of assembly, monomer. Mg(2+) serves as cofactor.

The enzyme catalyses adenosine(37) in tRNA + dimethylallyl diphosphate = N(6)-dimethylallyladenosine(37) in tRNA + diphosphate. In terms of biological role, catalyzes the transfer of a dimethylallyl group onto the adenine at position 37 in tRNAs that read codons beginning with uridine, leading to the formation of N6-(dimethylallyl)adenosine (i(6)A). This is tRNA dimethylallyltransferase from Enterobacter sp. (strain 638).